A 102-amino-acid chain; its full sequence is Large ribosomal subunit protein uL24 (102 aa).

This sequence belongs to the universal ribosomal protein uL24 family. Part of the 50S ribosomal subunit.

Functionally, one of two assembly initiator proteins, it binds directly to the 5'-end of the 23S rRNA, where it nucleates assembly of the 50S subunit. Its function is as follows. One of the proteins that surrounds the polypeptide exit tunnel on the outside of the subunit. In Macrococcus caseolyticus (strain JCSC5402) (Macrococcoides caseolyticum), this protein is Large ribosomal subunit protein uL24.